The following is a 490-amino-acid chain: Angiopoietin-related protein 1 (490 aa).

Residues 1-22 (MKAFVWTLSVLLFLLGSGHCKG) form the signal peptide. Residues 79–167 (ITRMDLENLK…LNVTTEMLKM (89 aa)) are a coiled coil. Residues Asn-159 and Asn-187 are each glycosylated (N-linked (GlcNAc...) asparagine). In terms of domain architecture, Fibrinogen C-terminal spans 270–490 (FINEGPFKDC…AVQMMIKPID (221 aa)). Cystine bridges form between Cys-279–Cys-308 and Cys-431–Cys-444.

It is found in the secreted. The protein is Angiopoietin-related protein 1 (Angptl1) of Mus musculus (Mouse).